The sequence spans 160 residues: Xanthine-guanine phosphoribosyltransferase (160 aa).

Residues 41–42 and 93–101 each bind 5-phospho-alpha-D-ribose 1-diphosphate; these read RG and DDLVDTGRT. Asp-94 contributes to the Mg(2+) binding site. Residues Asp-97 and Ile-140 each coordinate guanine. The xanthine site is built by Asp-97 and Ile-140. Residues 97–101 and 139–140 contribute to the GMP site; these read DTGRT and WI.

The protein belongs to the purine/pyrimidine phosphoribosyltransferase family. XGPT subfamily. Homotetramer. Mg(2+) is required as a cofactor.

The protein localises to the cell inner membrane. It catalyses the reaction GMP + diphosphate = guanine + 5-phospho-alpha-D-ribose 1-diphosphate. It carries out the reaction XMP + diphosphate = xanthine + 5-phospho-alpha-D-ribose 1-diphosphate. The catalysed reaction is IMP + diphosphate = hypoxanthine + 5-phospho-alpha-D-ribose 1-diphosphate. It participates in purine metabolism; GMP biosynthesis via salvage pathway; GMP from guanine: step 1/1. The protein operates within purine metabolism; XMP biosynthesis via salvage pathway; XMP from xanthine: step 1/1. In terms of biological role, purine salvage pathway enzyme that catalyzes the transfer of the ribosyl-5-phosphate group from 5-phospho-alpha-D-ribose 1-diphosphate (PRPP) to the N9 position of the 6-oxopurines guanine and xanthine to form the corresponding ribonucleotides GMP (guanosine 5'-monophosphate) and XMP (xanthosine 5'-monophosphate), with the release of PPi. To a lesser extent, also acts on hypoxanthine. This Desulfotalea psychrophila (strain LSv54 / DSM 12343) protein is Xanthine-guanine phosphoribosyltransferase.